Consider the following 402-residue polypeptide: Protein RETARDED ROOT GROWTH-LIKE (402 aa).

The helical transmembrane segment at 375-395 (SATLEWLIIILISMEIAISFY) threads the bilayer.

Belongs to the RMD1/sif2 family. Highly expressed in germinating seeds and developing seedlings. Also present at low levels in seedlings, roots, leaves, stems and flowers, and barely in siliques.

Its subcellular location is the mitochondrion membrane. The protein resides in the mitochondrion. In terms of biological role, mediates abscisic acid (ABA) signal transduction through mitochondrial retrograde regulation involving ABI4 during seed germination and seedling growth, and leading to the production of reactive oxygen species (ROS) by the alternative respiratory pathway. Required for the maintenance of mitochondrial structure. The sequence is that of Protein RETARDED ROOT GROWTH-LIKE from Arabidopsis thaliana (Mouse-ear cress).